A 321-amino-acid chain; its full sequence is Coproporphyrin III ferrochelatase (321 aa).

Positions 185 and 267 each coordinate Fe(2+).

This sequence belongs to the ferrochelatase family.

The protein localises to the cytoplasm. The catalysed reaction is Fe-coproporphyrin III + 2 H(+) = coproporphyrin III + Fe(2+). Its pathway is porphyrin-containing compound metabolism; protoheme biosynthesis. In terms of biological role, involved in coproporphyrin-dependent heme b biosynthesis. Catalyzes the insertion of ferrous iron into coproporphyrin III to form Fe-coproporphyrin III. The chain is Coproporphyrin III ferrochelatase from Lacticaseibacillus casei (strain BL23) (Lactobacillus casei).